We begin with the raw amino-acid sequence, 229 residues long: Peptidase E (229 aa).

Residues Ser-120, Asp-135, and His-157 each act as charge relay system in the active site.

It belongs to the peptidase S51 family.

It localises to the cytoplasm. The enzyme catalyses Dipeptidase E catalyzes the hydrolysis of dipeptides Asp-|-Xaa. It does not act on peptides with N-terminal Glu, Asn or Gln, nor does it cleave isoaspartyl peptides.. Functionally, hydrolyzes dipeptides containing N-terminal aspartate residues. May play a role in allowing the cell to use peptide aspartate to spare carbon otherwise required for the synthesis of the aspartate family of amino acids. The chain is Peptidase E from Citrobacter koseri (strain ATCC BAA-895 / CDC 4225-83 / SGSC4696).